The primary structure comprises 157 residues: Ribosome maturation factor RimP (157 aa).

This sequence belongs to the RimP family.

It is found in the cytoplasm. In terms of biological role, required for maturation of 30S ribosomal subunits. The polypeptide is Ribosome maturation factor RimP (Synechococcus sp. (strain JA-3-3Ab) (Cyanobacteria bacterium Yellowstone A-Prime)).